A 390-amino-acid chain; its full sequence is Magnesium-protoporphyrin IX monomethyl ester [oxidative] cyclase (390 aa).

The protein belongs to the AcsF family. It depends on Fe cation as a cofactor.

It catalyses the reaction Mg-protoporphyrin IX 13-monomethyl ester + 3 NADPH + 3 O2 + 2 H(+) = 3,8-divinyl protochlorophyllide a + 3 NADP(+) + 5 H2O. The protein operates within porphyrin-containing compound metabolism; chlorophyll biosynthesis (light-independent). Functionally, catalyzes the formation of the isocyclic ring in chlorophyll biosynthesis. Mediates the cyclase reaction, which results in the formation of divinylprotochlorophyllide (Pchlide) characteristic of all chlorophylls from magnesium-protoporphyrin IX 13-monomethyl ester (MgPMME). The chain is Magnesium-protoporphyrin IX monomethyl ester [oxidative] cyclase from Prochlorococcus marinus subsp. pastoris (strain CCMP1986 / NIES-2087 / MED4).